Reading from the N-terminus, the 382-residue chain is Acetyltransferase eriL (382 aa).

Transmembrane regions (helical) follow at residues 5-25, 33-53, 59-79, 146-166, 192-212, and 335-355; these read LQPL…LGAV, ALLF…TTTG, IVTW…LLIN, TLFY…SPVF, LWSY…ALGV, and GYMW…DPQF.

Belongs to the wax synthase family.

Its subcellular location is the membrane. The enzyme catalyses cyathatriol + acetyl-CoA = 11-O-acetylcyathatriol + CoA. The catalysed reaction is cyathin A3 + acetyl-CoA = 11-O-acetylcyathin A3 + CoA. It functions in the pathway secondary metabolite biosynthesis. Its function is as follows. Acetyltransferase; part of the gene cluster that mediates the biosynthesis of erinacines, cyathane-xylosides that show unique biological activities, including leishmanicidal activity, stimulating activity for nerve growth-factor synthesis, and agonistic activity toward the kappa opioid receptor. Within the pathway, eriL converts cyathatriol into 11-O-acetyl-cyathatriol. EriL is also able to acetylate cyathin A3 to produce 11-O-acetylcyathin A3. The first step of the erinacines biosynthesis pathway is catalyzed by the geranylgeranyl diphosphate (GGPP) synthase eriE via conversion of farnesyl pyrophosphate and isopentyl pyrophosphate into geranylgeranyl pyrophosphate (GGPP). GGPP is then substrate of the diterpene cyclase eriG for the production of cyatha-3,12-diene. The cytochrome P450 monooxygenase eriI then hydroxylates cyatha-3,12-diene at C-14 of the seven-membered ring to produce erinacol, which is further hydroxylated at C-15 by the cytochrome P450 monooxygenase eriC to yield cyathadiol. The cytochrome P450 monooxygenase eriA then catalyzes C-11 hydroxylation in the presence of the short chain dehydrogenase/reductase (SDR) eriH, which leads to the production of cyathatriol. The acetyltransferase eriL converts cyathatriol into 11-O-acetyl-cyathatriol. The SDR eriH catalyzes further oxidation of 11-O-acetyl-cyathatriol into 1-O-acetylcyathin A3. Finally, the glycosyl transferase eriJ tranfers xylose from UDP-xylose onto C-14 of 11-O-acetyl-cyathatriol to form eracine Q. EriJ is also able to convert 11-O-acetyl-cyathatriol to eracine Q2 by using UDP-D-glucose as cosubstrate, but at a lower rate. The polypeptide is Acetyltransferase eriL (Hericium erinaceus (Lion's mane mushroom)).